Consider the following 548-residue polypeptide: Chaperonin GroEL (548 aa).

Residues 30-33, lysine 51, 87-91, glycine 415, 479-481, and aspartate 495 contribute to the ATP site; these read TLGP, DGTTT, and NAA.

It belongs to the chaperonin (HSP60) family. In terms of assembly, forms a cylinder of 14 subunits composed of two heptameric rings stacked back-to-back. Interacts with the co-chaperonin GroES.

It is found in the cytoplasm. It catalyses the reaction ATP + H2O + a folded polypeptide = ADP + phosphate + an unfolded polypeptide.. In terms of biological role, together with its co-chaperonin GroES, plays an essential role in assisting protein folding. The GroEL-GroES system forms a nano-cage that allows encapsulation of the non-native substrate proteins and provides a physical environment optimized to promote and accelerate protein folding. This chain is Chaperonin GroEL, found in Salmonella arizonae (strain ATCC BAA-731 / CDC346-86 / RSK2980).